Here is a 674-residue protein sequence, read N- to C-terminus: DNA mismatch repair protein MutL (674 aa).

The protein belongs to the DNA mismatch repair MutL/HexB family.

Its function is as follows. This protein is involved in the repair of mismatches in DNA. It is required for dam-dependent methyl-directed DNA mismatch repair. May act as a 'molecular matchmaker', a protein that promotes the formation of a stable complex between two or more DNA-binding proteins in an ATP-dependent manner without itself being part of a final effector complex. The polypeptide is DNA mismatch repair protein MutL (Clostridium perfringens (strain ATCC 13124 / DSM 756 / JCM 1290 / NCIMB 6125 / NCTC 8237 / Type A)).